The sequence spans 249 residues: 3-deoxy-manno-octulosonate cytidylyltransferase (249 aa).

This sequence belongs to the KdsB family.

The protein resides in the cytoplasm. The enzyme catalyses 3-deoxy-alpha-D-manno-oct-2-ulosonate + CTP = CMP-3-deoxy-beta-D-manno-octulosonate + diphosphate. It functions in the pathway nucleotide-sugar biosynthesis; CMP-3-deoxy-D-manno-octulosonate biosynthesis; CMP-3-deoxy-D-manno-octulosonate from 3-deoxy-D-manno-octulosonate and CTP: step 1/1. It participates in bacterial outer membrane biogenesis; lipopolysaccharide biosynthesis. Activates KDO (a required 8-carbon sugar) for incorporation into bacterial lipopolysaccharide in Gram-negative bacteria. The chain is 3-deoxy-manno-octulosonate cytidylyltransferase from Aliivibrio salmonicida (strain LFI1238) (Vibrio salmonicida (strain LFI1238)).